Consider the following 426-residue polypeptide: Homeobox protein knotted-1-like LET12 (426 aa).

Disordered regions lie at residues Met1–Ala26, Gln85–Trp158, and Gly270–Asp290. Positions Gln15 to Gln24 are enriched in low complexity. Residues Ala104 to Gly114 show a composition bias toward gly residues. Residues Glu139–Asn151 show a composition bias toward low complexity. In terms of domain architecture, ELK spans Glu327 to Ile347. Residues Leu348–Asn411 constitute a DNA-binding region (homeobox; TALE-type). The disordered stretch occupies residues Arg406 to Arg426. Over residues Ser413 to Arg426 the composition is skewed to low complexity.

It belongs to the TALE/KNOX homeobox family. As to expression, ubiquitously expressed in the mature plant.

Its subcellular location is the nucleus. Functionally, may have a role to play in formative events in ovule and embryo morphogenesis. The sequence is that of Homeobox protein knotted-1-like LET12 (LET12) from Solanum lycopersicum (Tomato).